We begin with the raw amino-acid sequence, 293 residues long: Ribokinase (293 aa).

Substrate is bound by residues 11-13 (SMD), 39-43 (GKGAN), and glutamate 139. ATP-binding positions include asparagine 183 and 210-215 (TEGKQG). 2 residues coordinate K(+): aspartate 236 and threonine 238. ATP contacts are provided by residues 241–242 (GD) and asparagine 266. Aspartate 242 serves as a coordination point for substrate. Residue aspartate 242 is the Proton acceptor of the active site. 3 residues coordinate K(+): serine 272, serine 275, and glycine 277.

This sequence belongs to the carbohydrate kinase PfkB family. Ribokinase subfamily. In terms of assembly, homodimer. Requires Mg(2+) as cofactor.

Its subcellular location is the cytoplasm. The enzyme catalyses D-ribose + ATP = D-ribose 5-phosphate + ADP + H(+). It functions in the pathway carbohydrate metabolism; D-ribose degradation; D-ribose 5-phosphate from beta-D-ribopyranose: step 2/2. With respect to regulation, activated by a monovalent cation that binds near, but not in, the active site. The most likely occupant of the site in vivo is potassium. Ion binding induces a conformational change that may alter substrate affinity. Catalyzes the phosphorylation of ribose at O-5 in a reaction requiring ATP and magnesium. The resulting D-ribose-5-phosphate can then be used either for sythesis of nucleotides, histidine, and tryptophan, or as a component of the pentose phosphate pathway. The polypeptide is Ribokinase (Bacillus subtilis (strain 168)).